The chain runs to 647 residues: Exoribonuclease 2 (647 aa).

Residues 192-520 (REDLTALSFV…NHRLLKAIIS (329 aa)) form the RNB domain. In terms of domain architecture, S1 motif spans 565–647 (ESTFNAEIID…ETRNIVARPI (83 aa)).

It belongs to the RNR ribonuclease family. RNase II subfamily.

The protein localises to the cytoplasm. It catalyses the reaction Exonucleolytic cleavage in the 3'- to 5'-direction to yield nucleoside 5'-phosphates.. Its function is as follows. Involved in mRNA degradation. Hydrolyzes single-stranded polyribonucleotides processively in the 3' to 5' direction. This is Exoribonuclease 2 from Proteus mirabilis (strain HI4320).